A 1026-amino-acid polypeptide reads, in one-letter code: Multidrug resistance protein MdtC (1026 aa).

Topologically, residues 1–6 are cytoplasmic; that stretch reads MRFFAL. Residues 7 to 29 traverse the membrane as a helical segment; sequence FIYRPVATILIAAAITLCGILGF. Over 30–335 the chain is Periplasmic; it reads RLLPVAPLPQ…TIRASLQEVE (306 aa). A helical membrane pass occupies residues 336–353; sequence ETLAISVALVILVVFLFL. The Cytoplasmic portion of the chain corresponds to 354-359; that stretch reads RSGRAT. Residues 360–379 form a helical membrane-spanning segment; it reads LIPAVAVPVSLIGTFAAMYL. Topologically, residues 380–388 are periplasmic; sequence CGFSLNNLS. The helical transmembrane segment at 389–411 threads the bilayer; it reads LMALTIATGFVVDDAIVVLENIA. Over 412-430 the chain is Cytoplasmic; that stretch reads RHLEARMKPLQAALQGTRE. Residues 431-453 traverse the membrane as a helical segment; sequence VGFTVISMSLSLVAVFLPLLLMG. Topologically, residues 454 to 467 are periplasmic; the sequence is GLPGRLLREFAVTL. The helical transmembrane segment at 468-490 threads the bilayer; that stretch reads SVAIGISLVVSLTLTPMMCGWML. The Cytoplasmic segment spans residues 491 to 852; sequence KSSKPRTQPR…QVFQQTMNSQ (362 aa). The helical transmembrane segment at 853-875 threads the bilayer; the sequence is LILIVAAIATVYIVLGILYESYV. Over 876–894 the chain is Periplasmic; the sequence is HPLTILSTLPSAGVGALLA. Residues 895–917 form a helical membrane-spanning segment; sequence LELFNAPFSLIALIGIMLLIGIV. Over 918–947 the chain is Cytoplasmic; it reads KKNAIMMVDFALEAQRSGGLTPEQAIFQAC. The chain crosses the membrane as a helical span at residues 948-970; it reads LLRFRPIMMTTLAALFGALPLVL. Residues 971-984 are Periplasmic-facing; the sequence is SGGDGSELRQPLGI. Residues 985–1007 traverse the membrane as a helical segment; the sequence is TIVGGLVMSQLLTLYTTPVVYLF. Topologically, residues 1008 to 1026 are cytoplasmic; it reads FDRLRLRFSRKNSKPVVEI.

The protein belongs to the resistance-nodulation-cell division (RND) (TC 2.A.6) family. MdtC subfamily. Part of a tripartite efflux system composed of MdtA, MdtB and MdtC. MdtC forms a heteromultimer with MdtB.

Its subcellular location is the cell inner membrane. This chain is Multidrug resistance protein MdtC, found in Salmonella typhi.